Reading from the N-terminus, the 413-residue chain is Multifunctional CCA protein (413 aa).

Residues G8 and R11 each contribute to the ATP site. CTP is bound by residues G8 and R11. Mg(2+) is bound by residues D21 and D23. The ATP site is built by R91, R143, and R146. The CTP site is built by R91, R143, and R146. Positions 232–333 constitute an HD domain; sequence TGVHVMMVVD…VRLFERSDAL (102 aa).

The protein belongs to the tRNA nucleotidyltransferase/poly(A) polymerase family. Bacterial CCA-adding enzyme type 1 subfamily. In terms of assembly, monomer. Can also form homodimers and oligomers. It depends on Mg(2+) as a cofactor. Ni(2+) serves as cofactor.

The enzyme catalyses a tRNA precursor + 2 CTP + ATP = a tRNA with a 3' CCA end + 3 diphosphate. The catalysed reaction is a tRNA with a 3' CCA end + 2 CTP + ATP = a tRNA with a 3' CCACCA end + 3 diphosphate. Functionally, catalyzes the addition and repair of the essential 3'-terminal CCA sequence in tRNAs without using a nucleic acid template. Adds these three nucleotides in the order of C, C, and A to the tRNA nucleotide-73, using CTP and ATP as substrates and producing inorganic pyrophosphate. tRNA 3'-terminal CCA addition is required both for tRNA processing and repair. Also involved in tRNA surveillance by mediating tandem CCA addition to generate a CCACCA at the 3' terminus of unstable tRNAs. While stable tRNAs receive only 3'-terminal CCA, unstable tRNAs are marked with CCACCA and rapidly degraded. This chain is Multifunctional CCA protein, found in Burkholderia cenocepacia (strain ATCC BAA-245 / DSM 16553 / LMG 16656 / NCTC 13227 / J2315 / CF5610) (Burkholderia cepacia (strain J2315)).